The sequence spans 233 residues: uncharacterized protein (233 aa).

The protein belongs to the asfivirus H233R family.

This is an uncharacterized protein from Ornithodoros (relapsing fever ticks).